Consider the following 330-residue polypeptide: 4-hydroxythreonine-4-phosphate dehydrogenase (330 aa).

Residues His-136 and Thr-137 each contribute to the substrate site. Positions 166, 211, and 266 each coordinate a divalent metal cation. Substrate contacts are provided by Lys-274, Asn-283, and Arg-292.

Belongs to the PdxA family. As to quaternary structure, homodimer. Zn(2+) is required as a cofactor. It depends on Mg(2+) as a cofactor. Requires Co(2+) as cofactor.

The protein resides in the cytoplasm. The enzyme catalyses 4-(phosphooxy)-L-threonine + NAD(+) = 3-amino-2-oxopropyl phosphate + CO2 + NADH. It functions in the pathway cofactor biosynthesis; pyridoxine 5'-phosphate biosynthesis; pyridoxine 5'-phosphate from D-erythrose 4-phosphate: step 4/5. Its function is as follows. Catalyzes the NAD(P)-dependent oxidation of 4-(phosphooxy)-L-threonine (HTP) into 2-amino-3-oxo-4-(phosphooxy)butyric acid which spontaneously decarboxylates to form 3-amino-2-oxopropyl phosphate (AHAP). The polypeptide is 4-hydroxythreonine-4-phosphate dehydrogenase (Serratia proteamaculans (strain 568)).